Reading from the N-terminus, the 344-residue chain is Cycloartenol-C-24-methyltransferase 1 (344 aa).

It belongs to the class I-like SAM-binding methyltransferase superfamily. Erg6/SMT family.

It catalyses the reaction zymosterol + S-adenosyl-L-methionine = fecosterol + S-adenosyl-L-homocysteine + H(+). The protein operates within steroid biosynthesis; sterol biosynthesis. Its function is as follows. Catalyzes the methyl transfer from S-adenosyl-methionine to the C-24 of cycloartenol to form 24-methylene cycloartenol. This chain is Cycloartenol-C-24-methyltransferase 1 (Smt1-1), found in Oryza sativa subsp. japonica (Rice).